The chain runs to 550 residues: ATP synthase subunit alpha (550 aa).

ATP is bound at residue 172 to 179 (GDRKTGKT). Residues 514–550 (EDEQRVNEPPAKPLAGEENRETVTRFRDGTTDRPAES) are disordered. The segment covering 528–550 (AGEENRETVTRFRDGTTDRPAES) has biased composition (basic and acidic residues).

Belongs to the ATPase alpha/beta chains family. F-type ATPases have 2 components, CF(1) - the catalytic core - and CF(0) - the membrane proton channel. CF(1) has five subunits: alpha(3), beta(3), gamma(1), delta(1), epsilon(1). CF(0) has three main subunits: a(1), b(2) and c(9-12). The alpha and beta chains form an alternating ring which encloses part of the gamma chain. CF(1) is attached to CF(0) by a central stalk formed by the gamma and epsilon chains, while a peripheral stalk is formed by the delta and b chains.

Its subcellular location is the cell membrane. It carries out the reaction ATP + H2O + 4 H(+)(in) = ADP + phosphate + 5 H(+)(out). Its function is as follows. Produces ATP from ADP in the presence of a proton gradient across the membrane. The alpha chain is a regulatory subunit. In Salinispora arenicola (strain CNS-205), this protein is ATP synthase subunit alpha.